Here is a 375-residue protein sequence, read N- to C-terminus: Alcohol dehydrogenase 1A (375 aa).

N-acetylserine is present on serine 2. The residue at position 23 (serine 23) is a Phosphoserine. Cysteine 47 contributes to the Zn(2+) binding site. Position 48–52 (48–52 (GTDDH)) interacts with NAD(+). Zn(2+)-binding residues include histidine 68, cysteine 98, cysteine 101, cysteine 104, cysteine 112, and cysteine 175. NAD(+) contacts are provided by residues 200–205 (GLGGVG), aspartate 224, lysine 229, isoleucine 270, 293–295 (VGV), 318–320 (AIL), and arginine 370.

This sequence belongs to the zinc-containing alcohol dehydrogenase family. In terms of assembly, dimer of identical or heterodimer of closely related subunits alpha, beta, or gamma that are encoded by genes ADH1A, ADH1B, and ADH1C, respectively. Zn(2+) serves as cofactor.

The protein localises to the cytoplasm. It catalyses the reaction a primary alcohol + NAD(+) = an aldehyde + NADH + H(+). The enzyme catalyses a secondary alcohol + NAD(+) = a ketone + NADH + H(+). It carries out the reaction butan-1-ol + NAD(+) = butanal + NADH + H(+). The catalysed reaction is 1-propanol + NAD(+) = propanal + NADH + H(+). In terms of biological role, alcohol dehydrogenase. Oxidizes primary as well as secondary alcohols. Ethanol is a very poor substrate. The protein is Alcohol dehydrogenase 1A (ADH1A) of Homo sapiens (Human).